The primary structure comprises 256 residues: Ribosomal RNA small subunit methyltransferase A (256 aa).

Positions 12, 14, 39, 60, 85, and 103 each coordinate S-adenosyl-L-methionine.

This sequence belongs to the class I-like SAM-binding methyltransferase superfamily. rRNA adenine N(6)-methyltransferase family. RsmA subfamily.

The protein localises to the cytoplasm. The enzyme catalyses adenosine(1518)/adenosine(1519) in 16S rRNA + 4 S-adenosyl-L-methionine = N(6)-dimethyladenosine(1518)/N(6)-dimethyladenosine(1519) in 16S rRNA + 4 S-adenosyl-L-homocysteine + 4 H(+). In terms of biological role, specifically dimethylates two adjacent adenosines (A1518 and A1519) in the loop of a conserved hairpin near the 3'-end of 16S rRNA in the 30S particle. May play a critical role in biogenesis of 30S subunits. The chain is Ribosomal RNA small subunit methyltransferase A from Legionella pneumophila subsp. pneumophila (strain Philadelphia 1 / ATCC 33152 / DSM 7513).